Consider the following 391-residue polypeptide: NADH-quinone oxidoreductase subunit D (391 aa).

Belongs to the complex I 49 kDa subunit family. NDH-1 is composed of 14 different subunits. Subunits NuoB, C, D, E, F, and G constitute the peripheral sector of the complex.

The protein localises to the cell inner membrane. It catalyses the reaction a quinone + NADH + 5 H(+)(in) = a quinol + NAD(+) + 4 H(+)(out). Functionally, NDH-1 shuttles electrons from NADH, via FMN and iron-sulfur (Fe-S) centers, to quinones in the respiratory chain. The immediate electron acceptor for the enzyme in this species is believed to be ubiquinone. Couples the redox reaction to proton translocation (for every two electrons transferred, four hydrogen ions are translocated across the cytoplasmic membrane), and thus conserves the redox energy in a proton gradient. The protein is NADH-quinone oxidoreductase subunit D of Pelagibacter ubique (strain HTCC1062).